The sequence spans 1770 residues: MESQQLHQNPHSLHGSAAASVTSKEVPSNQDPLAVSASNLPEFDRDSTKVNSQQETTPGTSAVPENHHHVSPQPASVPPPQNGQYQQHGMMTPNKAMASNWAHYQQPSMMTCSHYQTSPAYYQPDPHYPLPQYIPPLSTSSPDPIDSQNQHSEVPQAKTKVRNNVLPPHTLTSEENFSTWVKFYIRFLKNSNLGDIIPNDQGEIKRQMTYEEHAYIYNTFQAFAPFHLLPTWVKQILEINYADILTVLCKSVSKMQTNNQELKDWIALANLEYDGSTSADTFEITVSTIIQRLKENNINVSDRLACQLILKGLSGDFKYLRNQYRTKTNMKLSQLFAEIQLIYDENKIMNLNKPSQYKQHSEYKNVSRTSPNTTNTKVTSRNYHRTNSSKPRAAKAHNIATSSKFSRVNNDHINESTVSSQYLSDDNELSLGQQQKESKPTRTIDSNDELPDHLLIDSGASQTLVRSAHYLHHATPNSEINIVDAQKQDIPINAIGNLHFNFQNGTKTSIKALHTPNIAYDLLSLSELANQNITACFTRNTLERSDGTVLAPIVKHGDFYWLSKKYLIPSHISKLTINNVNKSKSVNKYPYPLIHRMLGHANFRSIQKSLKKNAVTYLKESDIEWSNASTYQCPDCLIGKSTKHRHIKGSRLKYQESYEPFQYLHTDIFGPVHHLPKSAPSYFISFTDEKTRFQWVYPLHDRREESILNVFTSILAFIKNQFNARVLVIQMDRGSEYTNKTLHKFFTNRGITACYTTTADSRAHGVAERLNRTLLNDCRTLLHCSGLPNHLWFSAVEFSTIIRNSLVSPKNDKSARQHAGLAGLDITTILPFGQPVIVNNHNPDSKIHPRGIPGYALHPSRNSYGYIIYLPSLKKTVDTTNYVILQDNQSKLDQFNYDTLTFDDDLNRLTAHNQSFIEQNETEQSYDQNTESDHDYQSEIEINSDPLVNDFSSQSLNPLQLDKEPVQKVRAPKEVDADISEYNILPSTIRSRTPHIINKESTEMGGTIESDTTSPRHSSTFTARNQKRPGSPNDMIDLTSQDRVNYGLENIKTTRLGGTEEPYIQRNSDTNIKYRTTNSTPSIDDRSSNSESTTPIISIETKAVCDNTPSIDTDPPEYRSSDHATPNIMPDKSSKNVTADSILDDLPLPDLTNKSPTDTSDVSKDIPHIHSRQTNSSLGGMDDSNVLTTTKSKKRSLEDNETEIEVSRDTWNNKNMRSLEPPRSKKRINLIAAIKGVKSIKPVRTTLRYDEAITYNKDNKEKDRYVEAYHKEISQLLKMNTWDTNKYYDRNDIDPKKVINSMFIFNKKRDGTHKARFVARGDIQHPDTYDSDMQSNTVHHYALMTSLSIALDNDYYITQLDISSAYLYADIKEELYIRPPPHLGLNDKLLRLRKSLYGLKQSGANWYETIKSYLINCCDMQEVRGWSCVFKNSQVTICLFVDDMILFSKDLNANKKIITTLKKQYDTKIINLGEGDNEIQYDILGLEIKYQRSKYMKLGMEKSLTEKLPKLNVPLNPKGKKLRAPGQPGHYIDQDELEIDEDEYKEKVHEMQKLIGLASYVGYKFRFDLLYYINTLAQHILFPSRQVLDMTYELIQFIWNTRDKQLIWHKSKPVKPTNKLVVISDASYGNQPYYKSQIGNIYLLNGKVIGGKSTKASLTCTSTTEAEIHAVSEAIPLLNNLSHLVQELNKKPIIKGLLTDSRSTISIIKSTNEEKFRNRFFGTKAMRLRDEVSGNNLYVYYIETKMNIADVMTKPLPIKTFKLLTNKWIH.

Composition is skewed to polar residues over residues methionine 1–histidine 11, alanine 19–asparagine 39, lysine 49–threonine 60, valine 366–lysine 390, isoleucine 399–valine 408, and glutamate 415–glutamine 435. 2 disordered regions span residues methionine 1–glycine 89 and serine 355–glutamate 449. Positions glutamate 295 to histidine 397 are RNA-binding. Aspartate 457 (for protease activity; shared with dimeric partner) is an active-site residue. The segment at asparagine 579–cysteine 636 is integrase-type zinc finger-like. Positions glutamate 656–proline 831 constitute an Integrase catalytic domain. Aspartate 667 and aspartate 732 together coordinate Mg(2+). 2 disordered regions span residues glycine 1005–leucine 1038 and glycine 1057–glutamate 1205. Polar residues-rich tracts occupy residues glutamate 1009–arginine 1024 and glutamine 1065–serine 1082. Positions lysine 1193–arginine 1227 match the Bipartite nuclear localization signal motif. The Reverse transcriptase Ty1/copia-type domain occupies asparagine 1353–glutamine 1491. Aspartate 1361, aspartate 1442, aspartate 1443, aspartate 1625, glutamate 1667, and aspartate 1700 together coordinate Mg(2+). An RNase H Ty1/copia-type domain is found at aspartate 1625 to lysine 1767.

In terms of assembly, the capsid protein forms a homotrimer, from which the VLPs are assembled. The protease is a homodimer, whose active site consists of two apposed aspartic acid residues. Post-translationally, initially, virus-like particles (VLPs) are composed of the structural unprocessed proteins Gag and Gag-Pol, and also contain the host initiator methionine tRNA (tRNA(i)-Met) which serves as a primer for minus-strand DNA synthesis, and a dimer of genomic Ty RNA. Processing of the polyproteins occurs within the particle and proceeds by an ordered pathway, called maturation. First, the protease (PR) is released by autocatalytic cleavage of the Gag-Pol polyprotein, and this cleavage is a prerequisite for subsequent processing at the remaining sites to release the mature structural and catalytic proteins. Maturation takes place prior to the RT reaction and is required to produce transposition-competent VLPs.

It localises to the cytoplasm. It is found in the nucleus. The catalysed reaction is DNA(n) + a 2'-deoxyribonucleoside 5'-triphosphate = DNA(n+1) + diphosphate. The enzyme catalyses Endonucleolytic cleavage to 5'-phosphomonoester.. In terms of biological role, capsid protein (CA) is the structural component of the virus-like particle (VLP), forming the shell that encapsulates the retrotransposons dimeric RNA genome. The particles are assembled from trimer-clustered units and there are holes in the capsid shells that allow for the diffusion of macromolecules. CA also has nucleocapsid-like chaperone activity, promoting primer tRNA(i)-Met annealing to the multipartite primer-binding site (PBS), dimerization of Ty2 RNA and initiation of reverse transcription. Functionally, the aspartyl protease (PR) mediates the proteolytic cleavages of the Gag and Gag-Pol polyproteins after assembly of the VLP. Reverse transcriptase/ribonuclease H (RT) is a multifunctional enzyme that catalyzes the conversion of the retro-elements RNA genome into dsDNA within the VLP. The enzyme displays a DNA polymerase activity that can copy either DNA or RNA templates, and a ribonuclease H (RNase H) activity that cleaves the RNA strand of RNA-DNA heteroduplexes during plus-strand synthesis and hydrolyzes RNA primers. The conversion leads to a linear dsDNA copy of the retrotransposon that includes long terminal repeats (LTRs) at both ends. Its function is as follows. Integrase (IN) targets the VLP to the nucleus, where a subparticle preintegration complex (PIC) containing at least integrase and the newly synthesized dsDNA copy of the retrotransposon must transit the nuclear membrane. Once in the nucleus, integrase performs the integration of the dsDNA into the host genome. The polypeptide is Transposon Ty2-DR3 Gag-Pol polyprotein (TY2B-DR3) (Saccharomyces cerevisiae (strain ATCC 204508 / S288c) (Baker's yeast)).